The chain runs to 439 residues: Probable guanine deaminase (439 aa).

Residues His76 and His78 each coordinate Zn(2+). Substrate is bound by residues 78–81 (HYPQ), 203–204 (RF), 231–234 (HINE), and Asp321. Zn(2+) contacts are provided by His231 and Asp321.

This sequence belongs to the metallo-dependent hydrolases superfamily. ATZ/TRZ family. Requires Zn(2+) as cofactor.

The enzyme catalyses guanine + H2O + H(+) = xanthine + NH4(+). It functions in the pathway purine metabolism; guanine degradation; xanthine from guanine: step 1/1. Its function is as follows. Catalyzes the hydrolytic deamination of guanine, producing xanthine and ammonia. This is Probable guanine deaminase (guaD) from Deinococcus radiodurans (strain ATCC 13939 / DSM 20539 / JCM 16871 / CCUG 27074 / LMG 4051 / NBRC 15346 / NCIMB 9279 / VKM B-1422 / R1).